The primary structure comprises 480 residues: Glutamyl-tRNA(Gln) amidotransferase subunit A (480 aa).

Active-site charge relay system residues include lysine 79 and serine 154. The segment at 133 to 156 (NENSAYGPVRNPRDKSRVPGGSSG) is disordered. Serine 178 functions as the Acyl-ester intermediate in the catalytic mechanism.

This sequence belongs to the amidase family. GatA subfamily. In terms of assembly, heterotrimer of A, B and C subunits.

It carries out the reaction L-glutamyl-tRNA(Gln) + L-glutamine + ATP + H2O = L-glutaminyl-tRNA(Gln) + L-glutamate + ADP + phosphate + H(+). In terms of biological role, allows the formation of correctly charged Gln-tRNA(Gln) through the transamidation of misacylated Glu-tRNA(Gln) in organisms which lack glutaminyl-tRNA synthetase. The reaction takes place in the presence of glutamine and ATP through an activated gamma-phospho-Glu-tRNA(Gln). The polypeptide is Glutamyl-tRNA(Gln) amidotransferase subunit A (Koribacter versatilis (strain Ellin345)).